A 257-amino-acid chain; its full sequence is Pyridoxine 5'-phosphate synthase (257 aa).

Asn6 lines the 3-amino-2-oxopropyl phosphate pocket. Position 8 to 9 (8 to 9) interacts with 1-deoxy-D-xylulose 5-phosphate; the sequence is DH. Arg17 lines the 3-amino-2-oxopropyl phosphate pocket. Residue His41 is the Proton acceptor of the active site. 2 residues coordinate 1-deoxy-D-xylulose 5-phosphate: Arg43 and His48. Glu68 (proton acceptor) is an active-site residue. Residue Thr98 participates in 1-deoxy-D-xylulose 5-phosphate binding. Residue His210 is the Proton donor of the active site. 3-amino-2-oxopropyl phosphate is bound by residues Gly211 and 232 to 233; that span reads GQ.

This sequence belongs to the PNP synthase family. As to quaternary structure, homooctamer; tetramer of dimers.

It localises to the cytoplasm. The catalysed reaction is 3-amino-2-oxopropyl phosphate + 1-deoxy-D-xylulose 5-phosphate = pyridoxine 5'-phosphate + phosphate + 2 H2O + H(+). It participates in cofactor biosynthesis; pyridoxine 5'-phosphate biosynthesis; pyridoxine 5'-phosphate from D-erythrose 4-phosphate: step 5/5. Functionally, catalyzes the complicated ring closure reaction between the two acyclic compounds 1-deoxy-D-xylulose-5-phosphate (DXP) and 3-amino-2-oxopropyl phosphate (1-amino-acetone-3-phosphate or AAP) to form pyridoxine 5'-phosphate (PNP) and inorganic phosphate. The chain is Pyridoxine 5'-phosphate synthase from Campylobacter jejuni (strain RM1221).